The following is a 119-amino-acid chain: NADH-quinone oxidoreductase subunit A (119 aa).

3 helical membrane-spanning segments follow: residues 9–29, 63–83, and 88–108; these read VLLF…LGYV, LVAI…PWAV, and VGVT…VGFA.

It belongs to the complex I subunit 3 family. NDH-1 is composed of 14 different subunits. Subunits NuoA, H, J, K, L, M, N constitute the membrane sector of the complex.

The protein localises to the cell inner membrane. The enzyme catalyses a quinone + NADH + 5 H(+)(in) = a quinol + NAD(+) + 4 H(+)(out). Functionally, NDH-1 shuttles electrons from NADH, via FMN and iron-sulfur (Fe-S) centers, to quinones in the respiratory chain. The immediate electron acceptor for the enzyme in this species is believed to be ubiquinone. Couples the redox reaction to proton translocation (for every two electrons transferred, four hydrogen ions are translocated across the cytoplasmic membrane), and thus conserves the redox energy in a proton gradient. In Acidovorax sp. (strain JS42), this protein is NADH-quinone oxidoreductase subunit A.